The following is a 180-amino-acid chain: Zinc finger protein 740 (180 aa).

Residues methionine 1–alanine 11 show a composition bias toward polar residues. A disordered region spans residues methionine 1–serine 62. Lysine 9 participates in a covalent cross-link: Glycyl lysine isopeptide (Lys-Gly) (interchain with G-Cter in SUMO2). The residue at position 19 (serine 19) is a Phosphoserine. Over residues cysteine 31 to aspartate 56 the composition is skewed to basic and acidic residues. 2 consecutive C2H2-type zinc fingers follow at residues phenylalanine 88–histidine 110 and phenylalanine 116–histidine 138. Residues tyrosine 144–cysteine 166 form a C2H2-type 3; atypical zinc finger.

The protein belongs to the krueppel C2H2-type zinc-finger protein family.

It is found in the nucleus. May be involved in transcriptional regulation. In Mus musculus (Mouse), this protein is Zinc finger protein 740 (Znf740).